A 387-amino-acid polypeptide reads, in one-letter code: Major outer membrane protein P.IA (387 aa).

The N-terminal stretch at 1–19 (MRKKLTALVLSALPLAAVA) is a signal peptide.

This sequence belongs to the Gram-negative porin family. Homotrimer.

The protein resides in the cell outer membrane. Functionally, serves as a slightly cation selective porin. Major antigen on the gonococcal cell surface and it may have pathogenic properties in addition to its porin activity. The protein is Major outer membrane protein P.IA (porA) of Neisseria meningitidis serogroup C.